We begin with the raw amino-acid sequence, 251 residues long: Haloacid dehalogenase-like hydrolase domain-containing protein 3 (251 aa).

Residue K15 is modified to N6-acetyllysine; alternate. K15 carries the post-translational modification N6-succinyllysine; alternate.

This sequence belongs to the HAD-like hydrolase superfamily.

The chain is Haloacid dehalogenase-like hydrolase domain-containing protein 3 (HDHD3) from Homo sapiens (Human).